The following is a 138-amino-acid chain: Acidic phospholipase A2 CoaPLA2 (138 aa).

The N-terminal stretch at methionine 1 to glycine 16 is a signal peptide. 7 disulfide bridges follow: cysteine 42–cysteine 131, cysteine 44–cysteine 60, cysteine 59–cysteine 111, cysteine 65–cysteine 138, cysteine 66–cysteine 104, cysteine 73–cysteine 97, and cysteine 91–cysteine 102. 3 residues coordinate Ca(2+): tyrosine 43, glycine 45, and glycine 47. The active site involves histidine 63. Aspartate 64 serves as a coordination point for Ca(2+). Aspartate 105 is an active-site residue.

It belongs to the phospholipase A2 family. Group II subfamily. D49 sub-subfamily. In terms of assembly, homodimer. Ca(2+) is required as a cofactor. As to expression, expressed by the venom gland.

The protein localises to the secreted. The enzyme catalyses a 1,2-diacyl-sn-glycero-3-phosphocholine + H2O = a 1-acyl-sn-glycero-3-phosphocholine + a fatty acid + H(+). In terms of biological role, snake venom phospholipase A2 (PLA2) that shows very low inhibition of ADP-induced platelet aggregation in platelet-rich plasma of human, rabbit and guinea pig. Shows edema-inducing activity and myotoxicity. PLA2 catalyzes the calcium-dependent hydrolysis of the 2-acyl groups in 3-sn-phosphoglycerides. The polypeptide is Acidic phospholipase A2 CoaPLA2 (Crotalus lutosus abyssus (Grand Canyon rattlesnake)).